We begin with the raw amino-acid sequence, 106 residues long: MAPKSNKNQENINSKLALTIKSGKYTLGYKSVVKSLRTGKAKLVIIAANTPVLRKSELEYYAMLSKTPVYYFQGGNNELGTVCGKLFRVGTLSILDAGDSDILSSI.

It belongs to the eukaryotic ribosomal protein eL30 family. Component of the large ribosomal subunit. Mature ribosomes consist of a small (40S) and a large (60S) subunit. The 40S subunit contains about 32 different proteins and 1 molecule of RNA (18S). The 60S subunit contains 45 different proteins and 3 molecules of RNA (25S, 5.8S and 5S).

It localises to the cytoplasm. Functionally, component of the ribosome, a large ribonucleoprotein complex responsible for the synthesis of proteins in the cell. The small ribosomal subunit (SSU) binds messenger RNAs (mRNAs) and translates the encoded message by selecting cognate aminoacyl-transfer RNA (tRNA) molecules. The large subunit (LSU) contains the ribosomal catalytic site termed the peptidyl transferase center (PTC), which catalyzes the formation of peptide bonds, thereby polymerizing the amino acids delivered by tRNAs into a polypeptide chain. The nascent polypeptides leave the ribosome through a tunnel in the LSU and interact with protein factors that function in enzymatic processing, targeting, and the membrane insertion of nascent chains at the exit of the ribosomal tunnel. This is Large ribosomal subunit protein eL30 from Candida albicans (strain SC5314 / ATCC MYA-2876) (Yeast).